Here is a 382-residue protein sequence, read N- to C-terminus: MRAVCLMLTALLMLEYVCRSDTMSTCKSLDLELVKRKRIEAIRGQILSKLRLPKEPEIDQEGDTEEVPASLMSIYNSTVELSEEQVHTYIPSTQDAEEEAYFAKEVHKFNMKQSENTSKHQILFNMSEMRSVLGTDRLLSQAELRLLIKNHGLLDDSEQRLELYRGVGDKARYLKSHFVSKEWANRWVSFDVTQTLNEWLQGAGEEQGFQLKLPCDCGKPMEEFRFKISGMNKLRGNTETLAMKMPSKPHILLMSLPVERHSQLSSRKKRQTTTEEICSDKSESCCVRKLYIDFRKDLGWKWIHEPTGYFANYCIGPCTYIWNTENKYSQVLALYKHHNPGASAQPCCVPQVLEPLPIIYYVGRQHKVEQLSNMIVKSCRCS.

The N-terminal stretch at 1-20 (MRAVCLMLTALLMLEYVCRS) is a signal peptide. The segment at 23–68 (MSTCKSLDLELVKRKRIEAIRGQILSKLRLPKEPEIDQEGDTEEVP) is straightjacket domain. Residues 69-264 (ASLMSIYNST…SLPVERHSQL (196 aa)) are arm domain. Residues asparagine 76, asparagine 116, and asparagine 125 are each glycosylated (N-linked (GlcNAc...) asparagine). Residues 218–243 (GKPMEEFRFKISGMNKLRGNTETLAM) form a bowtie tail region. The short motif at 235 to 237 (RGN) is the Cell attachment site element. 4 disulfides stabilise this stretch: cysteine 278/cysteine 286, cysteine 285/cysteine 348, cysteine 314/cysteine 379, and cysteine 318/cysteine 381.

It belongs to the TGF-beta family. As to quaternary structure, latency-associated peptide: Homodimer; disulfide-linked. Latency-associated peptide: Interacts with Transforming growth factor beta-1 (TGF-beta-1) chain; interaction is non-covalent and maintains (TGF-beta-1) in a latent state; each Latency-associated peptide (LAP) monomer interacts with TGF-beta-1 in the other monomer. Transforming growth factor beta-1: Homodimer; disulfide-linked. Transforming growth factor beta-1: Interacts with TGF-beta receptors (tgfbr1 and tgfbr2), leading to signal transduction. Interacts with EFEMP2. Post-translationally, transforming growth factor beta-1 proprotein: The precursor proprotein is cleaved in the Golgi apparatus to form Transforming growth factor beta-1 (TGF-beta-1) and Latency-associated peptide (LAP) chains, which remain non-covalently linked, rendering TGF-beta-1 inactive. Expressed in blood leukocytes, kidney macrophages, brain, gill and spleen but not in liver.

It is found in the secreted. The protein localises to the extracellular space. It localises to the extracellular matrix. Transforming growth factor beta-1 proprotein: Precursor of the Latency-associated peptide (LAP) and Transforming growth factor beta-1 (TGF-beta-1) chains, which constitute the regulatory and active subunit of TGF-beta-1, respectively. Functionally, required to maintain the Transforming growth factor beta-1 (TGF-beta-1) chain in a latent state during storage in extracellular matrix. Associates non-covalently with TGF-beta-1 and regulates its activation via interaction with 'milieu molecules', such as LTBP1, LRRC32/GARP and LRRC33/NRROS, that control activation of TGF-beta-1. Interaction with integrins (ITGAV:ITGB6 or ITGAV:ITGB8) results in distortion of the Latency-associated peptide chain and subsequent release of the active TGF-beta-1. In terms of biological role, transforming growth factor beta-1: Multifunctional protein that regulates the growth and differentiation of various cell types and is involved in various processes, such as normal development, immune function, microglia function and responses to neurodegeneration. Activation into mature form follows different steps: following cleavage of the proprotein in the Golgi apparatus, Latency-associated peptide (LAP) and Transforming growth factor beta-1 (TGF-beta-1) chains remain non-covalently linked rendering TGF-beta-1 inactive during storage in extracellular matrix. At the same time, LAP chain interacts with 'milieu molecules', such as ltbp1, lrrc32/garp and lrrc33/nrros that control activation of TGF-beta-1 and maintain it in a latent state during storage in extracellular milieus. TGF-beta-1 is released from LAP by integrins (ITGAV:ITGB6 or ITGAV:ITGB8): integrin-binding to LAP stabilizes an alternative conformation of the LAP bowtie tail and results in distortion of the LAP chain and subsequent release of the active TGF-beta-1. Once activated following release of LAP, TGF-beta-1 acts by binding to TGF-beta receptors (tgfbr1 and tgfbr2), which transduce signal. While expressed by many cells types, TGF-beta-1 only has a very localized range of action within cell environment thanks to fine regulation of its activation by Latency-associated peptide chain (LAP) and 'milieu molecules'. Plays an important role in bone remodeling: acts as a potent stimulator of osteoblastic bone formation. Can promote either T-helper 17 cells (Th17) or regulatory T-cells (Treg) lineage differentiation in a concentration-dependent manner. Can induce epithelial-to-mesenchymal transition (EMT) and cell migration in various cell types. This Oncorhynchus mykiss (Rainbow trout) protein is Transforming growth factor beta-1 proprotein (tgfb1).